The chain runs to 425 residues: Serine--tRNA ligase (425 aa).

Position 230 to 232 (230 to 232) interacts with L-serine; the sequence is TAE. Residue 261-263 participates in ATP binding; it reads RSE. Glu284 serves as a coordination point for L-serine. 348-351 contributes to the ATP binding site; that stretch reads EISS. Residue Ser384 coordinates L-serine.

The protein belongs to the class-II aminoacyl-tRNA synthetase family. Type-1 seryl-tRNA synthetase subfamily. In terms of assembly, homodimer. The tRNA molecule binds across the dimer.

It is found in the cytoplasm. It carries out the reaction tRNA(Ser) + L-serine + ATP = L-seryl-tRNA(Ser) + AMP + diphosphate + H(+). The catalysed reaction is tRNA(Sec) + L-serine + ATP = L-seryl-tRNA(Sec) + AMP + diphosphate + H(+). It participates in aminoacyl-tRNA biosynthesis; selenocysteinyl-tRNA(Sec) biosynthesis; L-seryl-tRNA(Sec) from L-serine and tRNA(Sec): step 1/1. Its function is as follows. Catalyzes the attachment of serine to tRNA(Ser). Is also able to aminoacylate tRNA(Sec) with serine, to form the misacylated tRNA L-seryl-tRNA(Sec), which will be further converted into selenocysteinyl-tRNA(Sec). This is Serine--tRNA ligase from Streptococcus agalactiae serotype Ia (strain ATCC 27591 / A909 / CDC SS700).